A 473-amino-acid polypeptide reads, in one-letter code: Photosystem II CP43 reaction center protein (473 aa).

Positions 1 to 14 (MKILYSLRRFYHVE) are excised as a propeptide. Position 15 is an N-acetylthreonine (Thr-15). Phosphothreonine is present on Thr-15. 5 helical membrane-spanning segments follow: residues 69 to 93 (LFEV…PHLA), 134 to 155 (LLGP…QDRN), 178 to 200 (KALY…RKIT), 255 to 275 (KPFA…LSYS), and 291 to 312 (WFNN…ASQA). Glu-367 serves as a coordination point for [CaMn4O5] cluster. The chain crosses the membrane as a helical span at residues 447 to 471 (RARAAAAGFEKGIDRDLEPVVYMTP).

Belongs to the PsbB/PsbC family. PsbC subfamily. As to quaternary structure, PSII is composed of 1 copy each of membrane proteins PsbA, PsbB, PsbC, PsbD, PsbE, PsbF, PsbH, PsbI, PsbJ, PsbK, PsbL, PsbM, PsbT, PsbX, PsbY, PsbZ, Psb30/Ycf12, at least 3 peripheral proteins of the oxygen-evolving complex and a large number of cofactors. It forms dimeric complexes. Binds multiple chlorophylls and provides some of the ligands for the Ca-4Mn-5O cluster of the oxygen-evolving complex. It may also provide a ligand for a Cl- that is required for oxygen evolution. PSII binds additional chlorophylls, carotenoids and specific lipids. is required as a cofactor. Post-translationally, phosphorylated in both bundle sheath and mesophyll cells, phosphorylation increases when cells are grown under high rather than low light regimes (70 vs 900 umol photons/m-2/s).

The protein localises to the plastid. It is found in the chloroplast thylakoid membrane. Functionally, one of the components of the core complex of photosystem II (PSII). It binds chlorophyll and helps catalyze the primary light-induced photochemical processes of PSII. PSII is a light-driven water:plastoquinone oxidoreductase, using light energy to abstract electrons from H(2)O, generating O(2) and a proton gradient subsequently used for ATP formation. This is Photosystem II CP43 reaction center protein from Zea mays (Maize).